The chain runs to 95 residues: uncharacterized protein (95 aa).

Residues 14 to 50 (KMEQKLQEQLDGLLEKYTELLLGETNDELKEEVKQWI) are a coiled coil.

This is an uncharacterized protein from Bacillus subtilis (strain 168).